Consider the following 347-residue polypeptide: MRPILLSGHERSLTQVKFNREGDLLFSVAKDPIINAWFSHNGERLGTYEGHNGTVWTVDVDSTSTLLVSGSADNQMRLWEVATGKCLFTWEFTTAAKRVAFSEDCSQVLVVTEQRMGFRGSLRVFRINRDPATWTQQDVEPTRTITFSGPKAVVAAFAPCDQYIVTGHEDGKVAIYYHDDKEPESGIDAELEENSTKAHTDVISDLQMSADRTYFVTSSRDKTSKLIDSKTLQVIKTYATETPLNSASIHPTKPFVIVGGGQDAMNVTTTSARQGRFETRFWHKVFEEECARLPGHFGPINTIAIHPAGIAYASGGEDGYVRVNWFDPGFFNSKLYGADLELALEDQ.

6 WD repeats span residues 8 to 49 (GHER…GTYE), 50 to 89 (GHNG…CLFT), 146 to 186 (TFSG…PESG), 198 to 237 (AHTD…VIKT), 239 to 278 (ATET…GRFE), and 295 to 336 (GHFG…SKLY).

This sequence belongs to the eIF-3 subunit I family. As to quaternary structure, component of the eukaryotic translation initiation factor 3 (eIF-3) complex.

It localises to the cytoplasm. Component of the eukaryotic translation initiation factor 3 (eIF-3) complex, which is involved in protein synthesis of a specialized repertoire of mRNAs and, together with other initiation factors, stimulates binding of mRNA and methionyl-tRNAi to the 40S ribosome. The eIF-3 complex specifically targets and initiates translation of a subset of mRNAs involved in cell proliferation. The polypeptide is Eukaryotic translation initiation factor 3 subunit I (Mycosarcoma maydis (Corn smut fungus)).